The sequence spans 184 residues: Small ribosomal subunit protein uS7 (184 aa).

This sequence belongs to the universal ribosomal protein uS7 family. As to quaternary structure, part of the 30S ribosomal subunit.

One of the primary rRNA binding proteins, it binds directly to 16S rRNA where it nucleates assembly of the head domain of the 30S subunit. Is located at the subunit interface close to the decoding center. This Thermoplasma volcanium (strain ATCC 51530 / DSM 4299 / JCM 9571 / NBRC 15438 / GSS1) protein is Small ribosomal subunit protein uS7.